The following is a 251-amino-acid chain: 16S rRNA (guanine(1405)-N(7))-methyltransferase (251 aa).

Residues Tyr-56, His-81–Ser-83, Arg-87, Ala-111, Asp-131, Asp-157–Val-158, Phe-173, and Glu-182 each bind S-adenosyl-L-methionine.

It belongs to the methyltransferase superfamily. Aminoglycoside resistance family.

The enzyme catalyses guanosine(1405) in 16S rRNA + S-adenosyl-L-methionine = N(7)-methylguanosine(1405) in 16S rRNA + S-adenosyl-L-homocysteine. Functionally, specifically methylates the N(7) position of guanine 1405 in 16S rRNA. Confers resistance to various aminoglycosides, including kanamycin, tobramycin, amikacin, arbekacin, gentamicin, sisomicin and isepamicin. This chain is 16S rRNA (guanine(1405)-N(7))-methyltransferase (rmtB), found in Serratia marcescens.